Here is a 396-residue protein sequence, read N- to C-terminus: Proteinase-activated receptor 4 (396 aa).

The N-terminal stretch at 1–16 (MCWPLLYPLVLGLSIS) is a signal peptide. Residues 17–59 (LAEGIQTPSIYDDVESTRGSHEGPLGPTVELKEPKSSDKPNPR) constitute a propeptide, removed for receptor activation. The disordered stretch occupies residues 28 to 62 (DDVESTRGSHEGPLGPTVELKEPKSSDKPNPRGYP). A compositionally biased stretch (basic and acidic residues) spans 46-57 (ELKEPKSSDKPN). Over 60-94 (GYPGKFCANDSDTLELPASSQALLLGWVPTRLVPA) the chain is Extracellular. Residue Asn-68 is glycosylated (N-linked (GlcNAc...) asparagine). Residues 95–115 (LYGLVVAVGLPANGLALWVLA) traverse the membrane as a helical segment. The Cytoplasmic segment spans residues 116–120 (TRVPR). The helical transmembrane segment at 121 to 141 (LPSTILLMNLAVADLLLALVL) threads the bilayer. The Extracellular segment spans residues 142–162 (PPRLAYHLRGQRWPFGEAACR). Cys-161 and Cys-240 form a disulfide bridge. Residues 163–183 (VATAALYGHMYGSVLLLAAVS) form a helical membrane-spanning segment. Residues 184-203 (LDRYLALVHPLRARALRGQR) are Cytoplasmic-facing. Residues 204-224 (LTTGLCLVAWLSAATLALPLT) traverse the membrane as a helical segment. Residues 225–255 (LHRQTFRLAGSDRMLCHDALPLTEQTSHWRP) lie on the Extracellular side of the membrane. A helical transmembrane segment spans residues 256 to 276 (AFICLAVLGCFVPLLAMGLCY). At 277-295 (GATLRALAANGQRYSHALR) the chain is on the cytoplasmic side. Residues 296 to 316 (LTALVLFSAVASFTPSNVLLV) form a helical membrane-spanning segment. Residues 317–331 (LHYSNPSPEAWGNLY) lie on the Extracellular side of the membrane. Residues 332-355 (GAYVPSLALSTLNSCVDPFIYYYV) form a helical membrane-spanning segment. Over 356-396 (SHEFREKVRAMLCRQPEASSSSQASREAGSRGTAICSSTLL) the chain is Cytoplasmic.

The protein belongs to the G-protein coupled receptor 1 family. A proteolytic cleavage generates a new N-terminus that functions as a tethered ligand. Highly expressed in the spleen. Slight expression in the heart, lung, skeletal muscle and kidney. No detectable expression in brain, liver or testis. Also detected in platelets.

The protein localises to the cell membrane. Functionally, receptor for activated thrombin or trypsin coupled to G proteins that stimulate phosphoinositide hydrolysis. May play a role in platelets activation. This chain is Proteinase-activated receptor 4 (F2rl3), found in Mus musculus (Mouse).